We begin with the raw amino-acid sequence, 191 residues long: Guanylate kinase (191 aa).

Residues 6–184 enclose the Guanylate kinase-like domain; it reads GLIIILSSPS…TIQQIHTIIL (179 aa). Residue 13-20 coordinates ATP; it reads SPSGAGKS.

The protein belongs to the guanylate kinase family.

The protein resides in the cytoplasm. The catalysed reaction is GMP + ATP = GDP + ADP. Its function is as follows. Essential for recycling GMP and indirectly, cGMP. The polypeptide is Guanylate kinase (Rickettsia bellii (strain RML369-C)).